Here is a 208-residue protein sequence, read N- to C-terminus: Probable nicotinate-nucleotide adenylyltransferase (208 aa).

The protein belongs to the NadD family.

The catalysed reaction is nicotinate beta-D-ribonucleotide + ATP + H(+) = deamido-NAD(+) + diphosphate. It participates in cofactor biosynthesis; NAD(+) biosynthesis; deamido-NAD(+) from nicotinate D-ribonucleotide: step 1/1. Functionally, catalyzes the reversible adenylation of nicotinate mononucleotide (NaMN) to nicotinic acid adenine dinucleotide (NaAD). This chain is Probable nicotinate-nucleotide adenylyltransferase, found in Acidothermus cellulolyticus (strain ATCC 43068 / DSM 8971 / 11B).